The primary structure comprises 270 residues: Phosphatidylglycerol--prolipoprotein diacylglyceryl transferase (270 aa).

Transmembrane regions (helical) follow at residues 19–39 (FPVYWYGIIIGTGVLLGLWLA), 53–73 (FVDLVLFAVPIAIICARAYYV), 92–112 (QGGLAIHGGLIGAVMTGIIYA), and 117–137 (ISFWKLADIAAPSILLGQAIG). Arg138 contacts a 1,2-diacyl-sn-glycero-3-phospho-(1'-sn-glycerol). The next 3 membrane-spanning stretches (helical) occupy residues 178–198 (HPTFLYESLWSFAGVILLLLL), 206–226 (GELFFTYLIWYSIGRFFVEEL), and 236–256 (LRIAQVMSIGLIVISIIFIIV).

The protein belongs to the Lgt family.

It is found in the cell membrane. The enzyme catalyses L-cysteinyl-[prolipoprotein] + a 1,2-diacyl-sn-glycero-3-phospho-(1'-sn-glycerol) = an S-1,2-diacyl-sn-glyceryl-L-cysteinyl-[prolipoprotein] + sn-glycerol 1-phosphate + H(+). Its pathway is protein modification; lipoprotein biosynthesis (diacylglyceryl transfer). Functionally, catalyzes the transfer of the diacylglyceryl group from phosphatidylglycerol to the sulfhydryl group of the N-terminal cysteine of a prolipoprotein, the first step in the formation of mature lipoproteins. The chain is Phosphatidylglycerol--prolipoprotein diacylglyceryl transferase from Bacillus cytotoxicus (strain DSM 22905 / CIP 110041 / 391-98 / NVH 391-98).